The sequence spans 434 residues: Tryptophan synthase beta chain 2 (434 aa).

K110 bears the N6-(pyridoxal phosphate)lysine mark.

It belongs to the TrpB family. In terms of assembly, tetramer of two alpha and two beta chains. Pyridoxal 5'-phosphate is required as a cofactor.

The enzyme catalyses (1S,2R)-1-C-(indol-3-yl)glycerol 3-phosphate + L-serine = D-glyceraldehyde 3-phosphate + L-tryptophan + H2O. Its pathway is amino-acid biosynthesis; L-tryptophan biosynthesis; L-tryptophan from chorismate: step 5/5. Functionally, the beta subunit is responsible for the synthesis of L-tryptophan from indole and L-serine. The chain is Tryptophan synthase beta chain 2 (trpB2) from Aquifex aeolicus (strain VF5).